Consider the following 790-residue polypeptide: Ribonucleoside-diphosphate reductase large subunit (790 aa).

Substrate-binding positions include threonine 208, 223–224 (SC), glycine 254, 436–440 (NLCTE), and 621–625 (PTVSS). A disulfide bond links cysteine 224 and cysteine 453. Asparagine 436 acts as the Proton acceptor in catalysis. Residue cysteine 438 is the Cysteine radical intermediate of the active site. Glutamate 440 acts as the Proton acceptor in catalysis.

The protein belongs to the ribonucleoside diphosphate reductase large chain family. In terms of assembly, heterotetramer composed of a homodimer of the large subunit (R1) and a homodimer of the small subunit (R2). Larger multisubunit protein complex are also active, composed of (R1)n(R2)n.

It carries out the reaction a 2'-deoxyribonucleoside 5'-diphosphate + [thioredoxin]-disulfide + H2O = a ribonucleoside 5'-diphosphate + [thioredoxin]-dithiol. In terms of biological role, ribonucleoside-diphosphate reductase holoenzyme provides the precursors necessary for viral DNA synthesis. Allows virus growth in non-dividing cells, as well as reactivation from latency in infected hosts. Catalyzes the biosynthesis of deoxyribonucleotides from the corresponding ribonucleotides. The chain is Ribonucleoside-diphosphate reductase large subunit from Equus caballus (Horse).